The primary structure comprises 150 residues: Large ribosomal subunit protein uL13 (150 aa).

Positions 127 to 150 are disordered; it reads KGTEHPHSAQKPQPLQLNPSATAK. Over residues 136–150 the composition is skewed to polar residues; it reads QKPQPLQLNPSATAK.

Belongs to the universal ribosomal protein uL13 family. As to quaternary structure, part of the 50S ribosomal subunit.

Functionally, this protein is one of the early assembly proteins of the 50S ribosomal subunit, although it is not seen to bind rRNA by itself. It is important during the early stages of 50S assembly. The chain is Large ribosomal subunit protein uL13 from Synechococcus sp. (strain CC9902).